A 123-amino-acid chain; its full sequence is uncharacterized protein (123 aa).

Residues 34-53 (LPFFFLFLGNLGKFFFLWPL) form a helical membrane-spanning segment.

The protein localises to the membrane. This is an uncharacterized protein from Saccharomyces cerevisiae (strain ATCC 204508 / S288c) (Baker's yeast).